A 488-amino-acid chain; its full sequence is Centrosomal protein cep57l1 (488 aa).

A coiled-coil region spans residues 71-226 (LESEKTHARD…AQVQTSLEVN (156 aa)). 2 disordered regions span residues 232-272 (SASS…PPSK) and 311-342 (PRVS…LMSS). A compositionally biased stretch (basic residues) spans 241–250 (RKVKKKKQSK). Composition is skewed to basic and acidic residues over residues 259–270 (PSSKEPLSKEPP) and 314–325 (SQKDPKTVEHKP). Residues 377–403 (KNTDMREDLERELDYLVKQMEIKSDQI) are a coiled coil. A disordered region spans residues 416 to 464 (LKKTAKKQPRPPSTTKPAEDEQNIGATDPCTPRNKGNLANGTGTPNSKA). Residues 452–464 (NLANGTGTPNSKA) show a composition bias toward polar residues.

Belongs to the translokin family. As to quaternary structure, interacts with clip1, mis12, ndc80 and zwint. Interacts with gamma-tubulin.

Its subcellular location is the cytoplasm. The protein resides in the cytoskeleton. The protein localises to the microtubule organizing center. It is found in the centrosome. It localises to the chromosome. Its subcellular location is the centromere. The protein resides in the kinetochore. The protein localises to the spindle. In terms of biological role, required for spindle microtubule attachment to both kinetochores and centrosomes. Also functions to tether minus-ends of spindle microtubules to centrosomes. May act by forming ring-like structures around microtubules, or by serving as a cross-linker or scaffold at the attachment site. This Xenopus laevis (African clawed frog) protein is Centrosomal protein cep57l1 (cep57l1).